A 473-amino-acid chain; its full sequence is Glucose-1-phosphate adenylyltransferase small subunit, chloroplastic/amyloplastic (473 aa).

Residues 1–36 (MDVPLASKTFPSPSPSKREQCNIDGHKSSSKHADLN) form a disordered region. The segment covering 16–36 (SKREQCNIDGHKSSSKHADLN) has biased composition (basic and acidic residues).

It belongs to the bacterial/plant glucose-1-phosphate adenylyltransferase family. Heterotetramer. In terms of tissue distribution, abundantly expressed in the whole grains, a slightly less abundant expression is seen in leaves, while a low level expression is seen in the roots. A greater expression is seen in the endosperm than in the embryo and pericarp layers.

The protein resides in the plastid. Its subcellular location is the chloroplast. It localises to the amyloplast. It carries out the reaction alpha-D-glucose 1-phosphate + ATP + H(+) = ADP-alpha-D-glucose + diphosphate. It functions in the pathway glycan biosynthesis; starch biosynthesis. Its activity is regulated as follows. Insensitive to 3'phosphoglycerate and orthophosphate. In terms of biological role, this protein plays a role in synthesis of starch. It catalyzes the synthesis of the activated glycosyl donor, ADP-glucose from Glc-1-P and ATP. The chain is Glucose-1-phosphate adenylyltransferase small subunit, chloroplastic/amyloplastic (AGP-S) from Triticum aestivum (Wheat).